The chain runs to 446 residues: Pre-rRNA-processing protein crb3/ipi3 (446 aa).

5 WD repeats span residues 74–113 (ILPE…LIYF), 116–155 (AHYQ…DQNS), 172–214 (GHKR…LLTT), 216–257 (ALPS…SNNV), and 294–333 (SCQS…VLRR).

It belongs to the WD repeat IPI3/WDR18 family. Component of the RIX1 complex, composed of ipi1, rix1/ipi2 and crb3/ipi3 in a 1:2:2 stoichiometry. The complex interacts (via rix1) with mdn1 (via its hexameric AAA ATPase ring) and the pre-60S ribosome particles. Interacts with rix1, gcr3 and Las1.

It localises to the nucleus. It is found in the chromosome. Its function is as follows. Required for both pre-rRNA processing and heterochromatic gene silencing. Functionally, component of the RIX1 complex required for processing of ITS2 sequences from 35S pre-rRNA. In Schizosaccharomyces pombe (strain 972 / ATCC 24843) (Fission yeast), this protein is Pre-rRNA-processing protein crb3/ipi3 (crb3).